Here is an 88-residue protein sequence, read N- to C-terminus: MKTTLVVVVLACIVALTSALEADLLSHESCRYISSNRYCGHDYMDKLCNTTCNCKDVLSEFSCGVLKKDGQCNKADIQAKCKLTCDKC.

The N-terminal stretch at 1 to 19 (MKTTLVVVVLACIVALTSA) is a signal peptide. In terms of domain architecture, ShKT spans 54–88 (CKDVLSEFSCGVLKKDGQCNKADIQAKCKLTCDKC). 3 disulfides stabilise this stretch: cysteine 54/cysteine 88, cysteine 63/cysteine 81, and cysteine 72/cysteine 85.

It belongs to the sea anemone type 1 potassium channel toxin family. As to expression, expressed both outside and in acontia, a specialised envenomation structure laden with batteries of venom-containing nematocysts found only in the superfamily Metridioidea.

It is found in the secreted. The protein localises to the nematocyst. In terms of biological role, inhibits voltage-gated potassium channels (Kv1/KCNA). The protein is KTx type I of Calliactis polypus (Hermit crab anemone).